The chain runs to 351 residues: MNLVLRREGAVQFYAPDPQRYGSIYSAPVFYNPAMEKNRTLSVLLLRTLGGGLTVCEPLSGTGVRGIRYAVESKAVARLVLNDISRDAAELIKKNLELNGVDGEVYNDDANVLLHRLKNVCDVVDIDPFGSPAPYIHAAFRALRDEGLLCATATDTAVLVGRYPRKCLRRYWSTVRKTPFYIELGLRNLVGFIARVAASEDFSIRPLMSYWEGHYFRTCVAVARGARDADDALQNVGYVVYRRGMRQTTQLPDESSSGPLWLGPLGDPLIMHQMAQHGVYSDFLGVLEQEYSIEAPWHYRLPEFAVEGVSPTLAEALDLLRRSGIYATATHMAKDGFKADAGYGEVKRALF.

The region spanning 4–350 (VLRREGAVQF…AGYGEVKRAL (347 aa)) is the Trm1 methyltransferase domain. S-adenosyl-L-methionine-binding residues include Arg39, Arg65, Asp83, Asp109, and Ala110.

This sequence belongs to the class I-like SAM-binding methyltransferase superfamily. Trm1 family.

The enzyme catalyses guanosine(26) in tRNA + 2 S-adenosyl-L-methionine = N(2)-dimethylguanosine(26) in tRNA + 2 S-adenosyl-L-homocysteine + 2 H(+). In terms of biological role, dimethylates a single guanine residue at position 26 of a number of tRNAs using S-adenosyl-L-methionine as donor of the methyl groups. The sequence is that of tRNA (guanine(26)-N(2))-dimethyltransferase from Pyrobaculum neutrophilum (strain DSM 2338 / JCM 9278 / NBRC 100436 / V24Sta) (Thermoproteus neutrophilus).